The following is a 126-amino-acid chain: MKQLESSIRIEVKTDYIEEQSSPEEERYLFSYTITIINLGDEAVTLKSRMWCITDANGHESKVEGAGVVGETPTIKPNTAYQYTSGTVCETPFAVMQGYYVMVTEQGETFKAPIAPFRLAAPGLLH.

Residues 2 to 126 (KQLESSIRIE…FRLAAPGLLH (125 aa)) enclose the ApaG domain.

This Shewanella loihica (strain ATCC BAA-1088 / PV-4) protein is Protein ApaG.